Consider the following 178-residue polypeptide: Actin-related protein 2/3 complex subunit 3-B (178 aa).

Belongs to the ARPC3 family. In terms of assembly, component of the Arp2/3 complex composed of actr2/arp2, actr3/arp3, arpc1 (arpc1a or arpc1b), arpc2, arpc3, arpc4 and arpc5.

The protein resides in the cytoplasm. It is found in the cytoskeleton. The protein localises to the cell projection. It localises to the nucleus. In terms of biological role, component of the Arp2/3 complex, a multiprotein complex that mediates actin polymerization upon stimulation by nucleation-promoting factor (NPF). The Arp2/3 complex mediates the formation of branched actin networks in the cytoplasm, providing the force for cell motility. In addition to its role in the cytoplasmic cytoskeleton, the Arp2/3 complex also promotes actin polymerization in the nucleus, thereby regulating gene transcription and repair of damaged DNA. The Arp2/3 complex promotes homologous recombination (HR) repair in response to DNA damage by promoting nuclear actin polymerization, leading to drive motility of double-strand breaks (DSBs). In Xenopus laevis (African clawed frog), this protein is Actin-related protein 2/3 complex subunit 3-B (arpc3-b).